Reading from the N-terminus, the 61-residue chain is Sperm protamine P1 (61 aa).

The disordered stretch occupies residues 1–61 (MARYRHSRSR…RYSRRRRRRY (61 aa)).

It belongs to the protamine P1 family. Testis.

Its subcellular location is the nucleus. The protein localises to the chromosome. Its function is as follows. Protamines substitute for histones in the chromatin of sperm during the haploid phase of spermatogenesis. They compact sperm DNA into a highly condensed, stable and inactive complex. In Onychogalea fraenata (Bridled nail-tailed wallaby), this protein is Sperm protamine P1 (PRM1).